The chain runs to 121 residues: MASIPSTGSLIATHDYYRRRIGSTSSNSSCGSSEYAGEVIPHPPGLQRQDSGHWWSSFFFPNKQNQPGGMIGSEQKSGTYTVTNGQVACIAREMVLKKQLSRQLSESSDSGKVEQGSPPPS.

Disordered regions lie at residues 22 to 47 (GSTSSNSSCGSSEYAGEVIPHPPGLQ) and 101 to 121 (SRQLSESSDSGKVEQGSPPPS). Residues 23-33 (STSSNSSCGSS) are compositionally biased toward low complexity. Over residues 101-110 (SRQLSESSDS) the composition is skewed to polar residues.

It belongs to the PPDPF family.

Probable regulator of exocrine pancreas development. In Salmo salar (Atlantic salmon), this protein is Pancreatic progenitor cell differentiation and proliferation factor (ppdpf).